Here is a 146-residue protein sequence, read N- to C-terminus: VNLTAAEKTQVTNLWGKVNVKELGGEALSRLLVVYPWTRRFFEHFGDLSTAEAVLHNAKVLAHGEKVLTSFGEGLKHLDNLKGTFADLSELHCDKLHVDPENFRLLGNVLVIVLARHFGKEFTPDVQAAYEKVVAGVANALAHKYH.

Position 1 is an N-acetylvaline (V1). The 145-residue stretch at 2–146 (NLTAAEKTQV…VANALAHKYH (145 aa)) folds into the Globin domain. Position 12 is a phosphothreonine (T12). At K59 the chain carries N6-acetyllysine. H63 provides a ligand contact to heme b. K82 is subject to N6-acetyllysine. H92 provides a ligand contact to heme b. C93 bears the S-nitrosocysteine mark. K144 carries the N6-acetyllysine modification.

The protein belongs to the globin family. In terms of assembly, heterotetramer of two alpha chains and two beta chains. Red blood cells.

Functionally, involved in oxygen transport from the lung to the various peripheral tissues. The protein is Hemoglobin subunit beta (HBB) of Loxodonta africana (African elephant).